We begin with the raw amino-acid sequence, 142 residues long: ATP synthase epsilon chain (142 aa).

It belongs to the ATPase epsilon chain family. In terms of assembly, F-type ATPases have 2 components, CF(1) - the catalytic core - and CF(0) - the membrane proton channel. CF(1) has five subunits: alpha(3), beta(3), gamma(1), delta(1), epsilon(1). CF(0) has three main subunits: a, b and c.

It localises to the cell membrane. Produces ATP from ADP in the presence of a proton gradient across the membrane. The protein is ATP synthase epsilon chain of Lactiplantibacillus plantarum (strain ATCC BAA-793 / NCIMB 8826 / WCFS1) (Lactobacillus plantarum).